Reading from the N-terminus, the 555-residue chain is Branched-chain-amino-acid aminotransferase-like protein 1 (555 aa).

The protein belongs to the class-IV pyridoxal-phosphate-dependent aminotransferase family.

The sequence is that of Branched-chain-amino-acid aminotransferase-like protein 1 from Arabidopsis thaliana (Mouse-ear cress).